Reading from the N-terminus, the 291-residue chain is Ribonuclease Z (291 aa).

Positions 61, 63, 65, 66, 133, 201, and 257 each coordinate Zn(2+). The active-site Proton acceptor is aspartate 65.

This sequence belongs to the RNase Z family. As to quaternary structure, homodimer. Zn(2+) serves as cofactor.

The enzyme catalyses Endonucleolytic cleavage of RNA, removing extra 3' nucleotides from tRNA precursor, generating 3' termini of tRNAs. A 3'-hydroxy group is left at the tRNA terminus and a 5'-phosphoryl group is left at the trailer molecule.. Functionally, zinc phosphodiesterase, which displays some tRNA 3'-processing endonuclease activity. Probably involved in tRNA maturation, by removing a 3'-trailer from precursor tRNA. This Saccharolobus islandicus (strain L.S.2.15 / Lassen #1) (Sulfolobus islandicus) protein is Ribonuclease Z.